A 1989-amino-acid polypeptide reads, in one-letter code: Zinc finger C3H1 domain-containing protein (1989 aa).

4 disordered regions span residues 1 to 133, 148 to 218, 251 to 290, and 310 to 365; these read MATA…RPSF, GRPY…SKNE, SSKE…PEEK, and LPGD…LGED. An N-acetylalanine modification is found at alanine 2. Phosphoserine is present on residues serine 15, serine 28, and serine 34. The span at 20–32 shows a compositional bias: acidic residues; that stretch reads GELEDGEISDDDN. The span at 33-44 shows a compositional bias: low complexity; the sequence is NSQIRSRSSSSS. Over residues 62–72 the composition is skewed to gly residues; that stretch reads RGGGSGGGGGS. Composition is skewed to low complexity over residues 114 to 132, 183 to 192, and 201 to 210; these read PPSV…PRPS, GFSSSQSWRE, and KSFGRSPSRK. Serine 128 is subject to Phosphoserine. Residues 219–259 are a coiled coil; that stretch reads NCVEETFEDLLLKYKQIQLELECINKDEKLALSSKEENVQE. Serine 251 is subject to Phosphoserine. The segment covering 251–262 has biased composition (basic and acidic residues); sequence SSKEENVQEDPK. The span at 266–279 shows a compositional bias: polar residues; the sequence is FEDQTSTDNVSITK. Basic and acidic residues predominate over residues 280 to 290; it reads DSSKEVAPEEK. Polar residues predominate over residues 330 to 340; sequence KSDTTDSSQGL. Residues serine 352 and serine 383 each carry the phosphoserine modification. Residues 358–389 adopt a coiled-coil conformation; sequence SEKKLGEDEEELSELQLRLLALQSASKKWQQK. Disordered regions lie at residues 385-671 and 711-770; these read KWQQ…SNLS and LNDS…PEAL. A compositionally biased stretch (basic and acidic residues) spans 392-402; the sequence is QVMKESKEKLT. The span at 430–440 shows a compositional bias: basic residues; that stretch reads ALRKQQTKAWK. The stretch at 432–487 forms a coiled coil; that stretch reads RKQQTKAWKKLQQQKEQERQKEEDQRKQAEEEERRKREEEIRKIRDLSNQEEQYNR. Composition is skewed to basic and acidic residues over residues 444–479 and 501–515; these read QQKE…RDLS and KSSD…DKQP. Residues 527–537 are compositionally biased toward acidic residues; sequence NYEEVAMDTDS. Over residues 574-583 the composition is skewed to low complexity; the sequence is VSSLPPLSQP. Pro residues predominate over residues 594-616; sequence PLPPLPPLPPLPPEDPEQPPKPP. Polar residues predominate over residues 647–671; that stretch reads TSSNSDPPSPPVLNNSHPVPRSNLS. 4 positions are modified to phosphoserine: serine 662, serine 714, serine 717, and serine 719. A compositionally biased stretch (basic and acidic residues) spans 755–770; it reads PKSEKENDPLRTPEAL. Threonine 766 carries the phosphothreonine modification. 2 positions are modified to phosphoserine: serine 805 and serine 809. Positions 847–909 form a coiled coil; sequence LKNLVQQEAK…QQRVTIKKAL (63 aa). 3 positions are modified to phosphoserine: serine 948, serine 949, and serine 953. Positions 965-989 form a coiled coil; sequence EKRRLQKLEYEYALKIQKLKEARAL. Serine 998 and serine 1046 each carry phosphoserine. The C3H1-type zinc finger occupies 1185 to 1206; it reads FCRFDLTGTCNDDDCQWQHIQD. Phosphoserine is present on residues serine 1301, serine 1303, and serine 1304. TPR repeat units lie at residues 1361–1400, 1401–1434, 1438–1471, 1478–1511, 1602–1635, 1636–1669, and 1745–1778; these read VQLW…NKDN, PEIW…APDY, WTFL…ETSN, LEAL…ANDG, LPLY…CPIN, CQLL…NPQN, and PYLW…AMRC.

As to quaternary structure, component of the poly(A) tail exosome targeting (PAXT) complex made of accessory factors, such as PABPN1, ZFC3H1 and MTREX, and which directs a subset of long and polyadenylated poly(A) RNAs for exosomal degradation. Co-localizes with component of the CBC-ARS2 (CBCA) complex. Binds to RNA exosome components. Interacts with NCBP1/CBP80, ZC3H18, MTREX and PABPN1 in a RNase-insensitive manner, and with PABPC4, PABPC1 and ZC3H14 in a RNase-sensitive manner.

The protein localises to the nucleus. In terms of biological role, subunit of the trimeric poly(A) tail exosome targeting (PAXT) complex, a complex that directs a subset of long and polyadenylated poly(A) RNAs for exosomal degradation. The RNA exosome is fundamental for the degradation of RNA in eukaryotic nuclei. Substrate targeting is facilitated by its cofactor MTREX, which links to RNA-binding protein adapters. This is Zinc finger C3H1 domain-containing protein (ZFC3H1) from Homo sapiens (Human).